Here is a 190-residue protein sequence, read N- to C-terminus: dCTP deaminase, dUMP-forming (190 aa).

Residues lysine 101–arginine 106, aspartate 119, threonine 127–glutamate 129, glutamine 148, tyrosine 162, and glutamine 174 each bind dCTP. Glutamate 129 (proton donor/acceptor) is an active-site residue. Residues proline 161–aspartate 190 are disordered. The span at glycine 163–aspartate 190 shows a compositional bias: polar residues.

This sequence belongs to the dCTP deaminase family. In terms of assembly, homotrimer.

The catalysed reaction is dCTP + 2 H2O = dUMP + NH4(+) + diphosphate. It functions in the pathway pyrimidine metabolism; dUMP biosynthesis; dUMP from dCTP: step 1/1. In terms of biological role, bifunctional enzyme that catalyzes both the deamination of dCTP to dUTP and the hydrolysis of dUTP to dUMP without releasing the toxic dUTP intermediate. This chain is dCTP deaminase, dUMP-forming, found in Mycolicibacterium vanbaalenii (strain DSM 7251 / JCM 13017 / BCRC 16820 / KCTC 9966 / NRRL B-24157 / PYR-1) (Mycobacterium vanbaalenii).